A 462-amino-acid polypeptide reads, in one-letter code: Metal cation symporter ZIP8 (462 aa).

Positions 1-19 (MAPGRAVAGLLLLAATGLG) are cleaved as a signal peptide. Residues 20–132 (RPSEGPELAF…PSFSEVWGYG (113 aa)) lie on the Extracellular side of the membrane. 3 N-linked (GlcNAc...) asparagine glycosylation sites follow: Asn-40, Asn-88, and Asn-96. The helical transmembrane segment at 133-153 (FLSVTIINLASLLGLILTPLI) threads the bilayer. Over 154 to 160 (KKSYFPK) the chain is Cytoplasmic. The helical transmembrane segment at 161-181 (ILTYFVGLAIGTLFSNAIFQL) threads the bilayer. The Extracellular segment spans residues 182 to 191 (IPEAFGFNPK). A helical membrane pass occupies residues 192–212 (IDNYVEKAVAVFGGFYMLFFV). Residues 213 to 367 (ERTLKMLLKT…LNAGMSTRQA (155 aa)) are Cytoplasmic-facing. The XEXPHE-motif motif lies at 345–350 (EEFPHE). Residues 368-388 (LLFNFLSACSCYVGLAFGILV) form a helical membrane-spanning segment. The Extracellular portion of the chain corresponds to 389–390 (GN). The chain crosses the membrane as a helical span at residues 391 to 411 (NFAPNIIFALAGGMFLYISLA). The Cytoplasmic portion of the chain corresponds to 412–431 (DMFPEMNDMLREKVTGRQTD). A helical membrane pass occupies residues 432–452 (FTFFMIQNAGMLTGFTAILLI). The Extracellular segment spans residues 453–462 (TLYAGDIELQ).

The protein belongs to the ZIP transporter (TC 2.A.5) family. In terms of assembly, homodimer. N-glycosylated. N-glycosylation is not required for proper iron and zinc transport.

It localises to the cell membrane. The protein localises to the lysosome membrane. It is found in the apical cell membrane. The protein resides in the basolateral cell membrane. The enzyme catalyses Zn(2+)(out) + 2 hydrogencarbonate(out) = Zn(2+)(in) + 2 hydrogencarbonate(in). The catalysed reaction is selenite(out) + Zn(2+)(out) + hydrogencarbonate(out) = selenite(in) + Zn(2+)(in) + hydrogencarbonate(in). It catalyses the reaction Mn(2+)(out) + 2 hydrogencarbonate(out) = Mn(2+)(in) + 2 hydrogencarbonate(in). It carries out the reaction Fe(2+)(out) + 2 hydrogencarbonate(out) = Fe(2+)(in) + 2 hydrogencarbonate(in). The enzyme catalyses Cd(2+)(out) + 2 hydrogencarbonate(out) = Cd(2+)(in) + 2 hydrogencarbonate(in). The catalysed reaction is Co(2+)(out) + 2 hydrogencarbonate(out) = Co(2+)(in) + 2 hydrogencarbonate(in). In terms of biological role, electroneutral divalent metal cation:bicarbonate symporter of the plasma membrane mediating the cellular uptake of zinc and manganese, two divalent metal cations important for development, tissue homeostasis and immunity. Transports an electroneutral complex composed of a divalent metal cation and two bicarbonate anions or alternatively a bicarbonate and a selenite anion. Thereby, it also contributes to the cellular uptake of selenium, an essential trace metal and micronutrient. Also imports cadmium a non-essential metal which is cytotoxic and carcinogenic. May also transport iron and cobalt through membranes. Through zinc import, indirectly regulates the metal-dependent transcription factor MTF1 and the expression of some metalloproteases involved in cartilage catabolism and also probably heart development. Also indirectly regulates the expression of proteins involved in cell morphology and cytoskeleton organization. Indirectly controls innate immune function and inflammatory response by regulating zinc cellular uptake which in turn modulates the expression of genes specific of these processes. Protects, for instance, cells from injury and death at the onset of inflammation. By regulating zinc influx into monocytes also directly modulates their adhesion to endothelial cells and arteries. Reclaims manganese from the bile at the apical membrane of hepatocytes, thereby regulating the activity of the manganese-dependent enzymes through the systemic levels of the nutrient. Also participates in manganese reabsorption in the proximal tubule of the kidney. By mediating the extracellular uptake of manganese by cells of the blood-brain barrier, may also play a role in the transport of the micronutrient to the brain. With manganese cellular uptake also participates in mitochondrial proper function. Finally, also probably functions intracellularly, translocating zinc from lysosome to cytosol to indirectly enhance the expression of specific genes during TCR-mediated T cell activation. In Rattus norvegicus (Rat), this protein is Metal cation symporter ZIP8.